The chain runs to 220 residues: UPF0502 protein Pnap_3223 (220 aa).

It belongs to the UPF0502 family.

In Polaromonas naphthalenivorans (strain CJ2), this protein is UPF0502 protein Pnap_3223.